We begin with the raw amino-acid sequence, 114 residues long: UPF0342 protein SSP0954 (114 aa).

It belongs to the UPF0342 family.

This Staphylococcus saprophyticus subsp. saprophyticus (strain ATCC 15305 / DSM 20229 / NCIMB 8711 / NCTC 7292 / S-41) protein is UPF0342 protein SSP0954.